The chain runs to 232 residues: Flagellar L-ring protein (232 aa).

The signal sequence occupies residues 1-21 (MQKYALHAYPVMALMVATLTG). The N-palmitoyl cysteine moiety is linked to residue cysteine 22. Cysteine 22 carries S-diacylglycerol cysteine lipidation.

It belongs to the FlgH family. As to quaternary structure, the basal body constitutes a major portion of the flagellar organelle and consists of four rings (L,P,S, and M) mounted on a central rod.

The protein resides in the cell outer membrane. The protein localises to the bacterial flagellum basal body. Its function is as follows. Assembles around the rod to form the L-ring and probably protects the motor/basal body from shearing forces during rotation. The protein is Flagellar L-ring protein of Salmonella choleraesuis (strain SC-B67).